A 396-amino-acid chain; its full sequence is Phosphoglycerate kinase (396 aa).

Residues 21–23 (DFN), R36, 59–62 (HLGK), R119, and R156 contribute to the substrate site. ATP is bound by residues K206, E325, and 352-355 (GGDS).

The protein belongs to the phosphoglycerate kinase family. In terms of assembly, monomer.

The protein localises to the cytoplasm. The catalysed reaction is (2R)-3-phosphoglycerate + ATP = (2R)-3-phospho-glyceroyl phosphate + ADP. The protein operates within carbohydrate degradation; glycolysis; pyruvate from D-glyceraldehyde 3-phosphate: step 2/5. This chain is Phosphoglycerate kinase, found in Staphylococcus carnosus (strain TM300).